Reading from the N-terminus, the 202-residue chain is Small ribosomal subunit protein uS4c (202 aa).

An S4 RNA-binding domain is found at 90–153; sequence MRLDNIIFRL…KSQAIISKNL (64 aa).

It belongs to the universal ribosomal protein uS4 family. As to quaternary structure, part of the 30S ribosomal subunit. Contacts protein S5. The interaction surface between S4 and S5 is involved in control of translational fidelity.

It is found in the plastid. The protein resides in the chloroplast. Functionally, one of the primary rRNA binding proteins, it binds directly to 16S rRNA where it nucleates assembly of the body of the 30S subunit. In terms of biological role, with S5 and S12 plays an important role in translational accuracy. The polypeptide is Small ribosomal subunit protein uS4c (rps4) (Rosulabryum capillare (Capillary thread-moss)).